Reading from the N-terminus, the 494-residue chain is Serine/threonine-protein kinase cst-1 (494 aa).

Positions 1–27 (MPPSTDSSRRNSEEGFSDGFKLDSSAL) are disordered. The Protein kinase domain occupies 35–286 (FDIVGKLGEG…ALRLCEHTFI (252 aa)). ATP is bound by residues 41 to 49 (LGEGSYGSV) and K64. The Proton acceptor role is filled by D154. The segment at 364–413 (IPKSAYGSSRNNGSPRVQPPGHTASACDPSNNPPFAEEGTGPNFQIGTSE) is disordered. The span at 369–378 (YGSSRNNGSP) shows a compositional bias: polar residues. An SARAH domain is found at 443 to 490 (FEFLRNITLDELIRRKESLDSEMEEEIRELQRRYKTKRQPILDVIEIK).

It belongs to the protein kinase superfamily. STE Ser/Thr protein kinase family. STE20 subfamily. The cofactor is Mg(2+). In terms of processing, proteolytically cleaved by caspase-3 during apoptosis which results in kinase activation.

It carries out the reaction L-seryl-[protein] + ATP = O-phospho-L-seryl-[protein] + ADP + H(+). It catalyses the reaction L-threonyl-[protein] + ATP = O-phospho-L-threonyl-[protein] + ADP + H(+). Serine/threonine-protein kinase which extends lifespan and delays tissue aging, probably by activating daf-16. The polypeptide is Serine/threonine-protein kinase cst-1 (cst-1) (Caenorhabditis briggsae).